A 337-amino-acid chain; its full sequence is Holliday junction branch migration complex subunit RuvB (337 aa).

Residues 4-184 (ADRLIEPIAS…FGIVQRLEFY (181 aa)) form a large ATPase domain (RuvB-L) region. Residues Ile23, Arg24, Gly65, Lys68, Thr69, Thr70, 131-133 (EDY), Arg174, Tyr184, and Arg221 contribute to the ATP site. Thr69 contacts Mg(2+). Positions 185-255 (NVADLSTIVS…TAAAALDMLE (71 aa)) are small ATPAse domain (RuvB-S). Positions 258–337 (SEGFDIMDRK…FGITKDQTKD (80 aa)) are head domain (RuvB-H). Arg294, Arg313, and Arg318 together coordinate DNA.

The protein belongs to the RuvB family. In terms of assembly, homohexamer. Forms an RuvA(8)-RuvB(12)-Holliday junction (HJ) complex. HJ DNA is sandwiched between 2 RuvA tetramers; dsDNA enters through RuvA and exits via RuvB. An RuvB hexamer assembles on each DNA strand where it exits the tetramer. Each RuvB hexamer is contacted by two RuvA subunits (via domain III) on 2 adjacent RuvB subunits; this complex drives branch migration. In the full resolvosome a probable DNA-RuvA(4)-RuvB(12)-RuvC(2) complex forms which resolves the HJ.

The protein localises to the cytoplasm. It catalyses the reaction ATP + H2O = ADP + phosphate + H(+). Functionally, the RuvA-RuvB-RuvC complex processes Holliday junction (HJ) DNA during genetic recombination and DNA repair, while the RuvA-RuvB complex plays an important role in the rescue of blocked DNA replication forks via replication fork reversal (RFR). RuvA specifically binds to HJ cruciform DNA, conferring on it an open structure. The RuvB hexamer acts as an ATP-dependent pump, pulling dsDNA into and through the RuvAB complex. RuvB forms 2 homohexamers on either side of HJ DNA bound by 1 or 2 RuvA tetramers; 4 subunits per hexamer contact DNA at a time. Coordinated motions by a converter formed by DNA-disengaged RuvB subunits stimulates ATP hydrolysis and nucleotide exchange. Immobilization of the converter enables RuvB to convert the ATP-contained energy into a lever motion, pulling 2 nucleotides of DNA out of the RuvA tetramer per ATP hydrolyzed, thus driving DNA branch migration. The RuvB motors rotate together with the DNA substrate, which together with the progressing nucleotide cycle form the mechanistic basis for DNA recombination by continuous HJ branch migration. Branch migration allows RuvC to scan DNA until it finds its consensus sequence, where it cleaves and resolves cruciform DNA. The chain is Holliday junction branch migration complex subunit RuvB from Colwellia psychrerythraea (strain 34H / ATCC BAA-681) (Vibrio psychroerythus).